We begin with the raw amino-acid sequence, 494 residues long: Cytochrome P450 2B11 (494 aa).

Ser-128 is subject to Phosphoserine; by PKA. A heme-binding site is contributed by Cys-436.

Belongs to the cytochrome P450 family. It depends on heme as a cofactor.

It is found in the endoplasmic reticulum membrane. The protein resides in the microsome membrane. It carries out the reaction an organic molecule + reduced [NADPH--hemoprotein reductase] + O2 = an alcohol + oxidized [NADPH--hemoprotein reductase] + H2O + H(+). Cytochromes P450 are a group of heme-thiolate monooxygenases. In liver microsomes, this enzyme is involved in an NADPH-dependent electron transport pathway. This isozyme seems responsible for metabolism of 2,2',4,4',5,5'-hexachlorobiphenyl. The sequence is that of Cytochrome P450 2B11 (CYP2B11) from Canis lupus familiaris (Dog).